The sequence spans 277 residues: NH(3)-dependent NAD(+) synthetase (277 aa).

47 to 54 (GISGGQDS) contributes to the ATP binding site. Asp53 is a binding site for Mg(2+). Arg141 is a binding site for deamido-NAD(+). Residue Thr161 participates in ATP binding. Glu166 is a binding site for Mg(2+). Deamido-NAD(+)-binding residues include Lys174 and Asp181. Lys190 and Thr212 together coordinate ATP. Position 261–262 (261–262 (HK)) interacts with deamido-NAD(+).

This sequence belongs to the NAD synthetase family. In terms of assembly, homodimer.

It catalyses the reaction deamido-NAD(+) + NH4(+) + ATP = AMP + diphosphate + NAD(+) + H(+). Its pathway is cofactor biosynthesis; NAD(+) biosynthesis; NAD(+) from deamido-NAD(+) (ammonia route): step 1/1. Functionally, catalyzes the ATP-dependent amidation of deamido-NAD to form NAD. Uses ammonia as a nitrogen source. This Lactobacillus gasseri (strain ATCC 33323 / DSM 20243 / BCRC 14619 / CIP 102991 / JCM 1131 / KCTC 3163 / NCIMB 11718 / NCTC 13722 / AM63) protein is NH(3)-dependent NAD(+) synthetase.